A 98-amino-acid chain; its full sequence is MTSISLNLIMAFSLALAGVLIYRSHLMSTLLCLEGMMLSLFILMALLISHFHMLSVSMAPLILLVFSACEAGVGLALLVKTSTDYGNDYVQNLNLLQC.

3 helical membrane-spanning segments follow: residues Met-1–Ile-21, Ser-28–Ile-48, and Ala-59–Val-79.

The protein belongs to the complex I subunit 4L family. Core subunit of respiratory chain NADH dehydrogenase (Complex I) which is composed of 45 different subunits.

It localises to the mitochondrion inner membrane. The catalysed reaction is a ubiquinone + NADH + 5 H(+)(in) = a ubiquinol + NAD(+) + 4 H(+)(out). Core subunit of the mitochondrial membrane respiratory chain NADH dehydrogenase (Complex I) which catalyzes electron transfer from NADH through the respiratory chain, using ubiquinone as an electron acceptor. Part of the enzyme membrane arm which is embedded in the lipid bilayer and involved in proton translocation. This is NADH-ubiquinone oxidoreductase chain 4L (MT-ND4L) from Vombatus ursinus (Common wombat).